The following is a 259-amino-acid chain: Aliphatic sulfonates import ATP-binding protein SsuB 1 (259 aa).

Positions 15–229 (VECRRITRRF…QASTPGFQAL (215 aa)) constitute an ABC transporter domain. Residue 47 to 54 (GSSGSGKT) coordinates ATP.

This sequence belongs to the ABC transporter superfamily. Aliphatic sulfonates importer (TC 3.A.1.17.2) family. As to quaternary structure, the complex is composed of two ATP-binding proteins (SsuB), two transmembrane proteins (SsuC) and a solute-binding protein (SsuA).

It is found in the cell inner membrane. The enzyme catalyses ATP + H2O + aliphatic sulfonate-[sulfonate-binding protein]Side 1 = ADP + phosphate + aliphatic sulfonateSide 2 + [sulfonate-binding protein]Side 1.. Functionally, part of the ABC transporter complex SsuABC involved in aliphatic sulfonates import. Responsible for energy coupling to the transport system. The chain is Aliphatic sulfonates import ATP-binding protein SsuB 1 from Pseudomonas fluorescens (strain ATCC BAA-477 / NRRL B-23932 / Pf-5).